The primary structure comprises 232 residues: UPF0758 protein FN0909 (232 aa).

In terms of domain architecture, MPN spans 110 to 232 (KISNKDILLK…YFSFLEEGLI (123 aa)). Residues histidine 181, histidine 183, and aspartate 194 each coordinate Zn(2+). Residues 181-194 (HNHPSDNITPSKSD) carry the JAMM motif motif.

This sequence belongs to the UPF0758 family.

The polypeptide is UPF0758 protein FN0909 (Fusobacterium nucleatum subsp. nucleatum (strain ATCC 25586 / DSM 15643 / BCRC 10681 / CIP 101130 / JCM 8532 / KCTC 2640 / LMG 13131 / VPI 4355)).